The primary structure comprises 245 residues: 1-(5-phosphoribosyl)-5-[(5-phosphoribosylamino)methylideneamino] imidazole-4-carboxamide isomerase (245 aa).

Catalysis depends on Asp-11, which acts as the Proton acceptor. Asp-132 serves as the catalytic Proton donor.

It belongs to the HisA/HisF family.

The protein localises to the cytoplasm. It catalyses the reaction 1-(5-phospho-beta-D-ribosyl)-5-[(5-phospho-beta-D-ribosylamino)methylideneamino]imidazole-4-carboxamide = 5-[(5-phospho-1-deoxy-D-ribulos-1-ylimino)methylamino]-1-(5-phospho-beta-D-ribosyl)imidazole-4-carboxamide. Its pathway is amino-acid biosynthesis; L-histidine biosynthesis; L-histidine from 5-phospho-alpha-D-ribose 1-diphosphate: step 4/9. The sequence is that of 1-(5-phosphoribosyl)-5-[(5-phosphoribosylamino)methylideneamino] imidazole-4-carboxamide isomerase from Geobacillus thermodenitrificans (strain NG80-2).